Here is a 131-residue protein sequence, read N- to C-terminus: uncharacterized protein (131 aa).

This is an uncharacterized protein from Orgyia pseudotsugata multicapsid polyhedrosis virus (OpMNPV).